The chain runs to 95 residues: Large ribosomal subunit protein bL27 (95 aa).

Residues 1–9 (MLNMNLQFF) constitute a propeptide that is removed on maturation.

Belongs to the bacterial ribosomal protein bL27 family. Post-translationally, the N-terminus is cleaved by ribosomal processing cysteine protease Prp.

The polypeptide is Large ribosomal subunit protein bL27 (Agathobacter rectalis (strain ATCC 33656 / DSM 3377 / JCM 17463 / KCTC 5835 / VPI 0990) (Eubacterium rectale)).